Reading from the N-terminus, the 992-residue chain is UPF0182 protein BCG_3215c (992 aa).

The next 7 membrane-spanning stretches (helical) occupy residues 18–38 (ILIMIALGVIVLLLAGPRLID), 63–83 (IVVCLVAGVVVGGIVFGGLAL), 113–133 (LVGIGIPAAIGLLAGIVAQSY), 175–195 (LVSVFLAFVANLVAHYIFGGI), 210–230 (VQLVSLVGVLVLLKAVAYWLD), 259–279 (KLILMAIALICAAAVFSAIAL), and 287–307 (IGLVLLLLSSLIVGAGWPLIV). The disordered stretch occupies residues 906-938 (PTEAAVPPSPAANPPPPASGPQPPPVTAAPPVP). Pro residues predominate over residues 912–938 (PPSPAANPPPPASGPQPPPVTAAPPVP).

Belongs to the UPF0182 family.

It localises to the cell membrane. In Mycobacterium bovis (strain BCG / Pasteur 1173P2), this protein is UPF0182 protein BCG_3215c.